The primary structure comprises 402 residues: Plasminogen activator inhibitor 1 (402 aa).

A signal peptide spans 1–23 (MQMSPALTCLVLGLALVFGEGSA). Asn232, Asn288, and Asn352 each carry an N-linked (GlcNAc...) asparagine glycan.

It belongs to the serpin family. Forms a heterodimer with TMPRSS7. Interacts with VTN. Binds LRP1B; binding is followed by internalization and degradation. Interacts with PPP1CB. In complex with PLAU/uPA, interacts with PLAUR/uPAR. Interacts with SORL1 and LRP1, either alone or in complex with PLAU; these interactions are abolished in the presence of LRPAP1/RAP. The ternary complex composed of PLAUR-PLAU-PAI1 also interacts with SORL1. Interacts with PLAT/tPA. Also interacts with SORL1, when complexed to PLAT/tPA. Inactivated by proteolytic attack of the urokinase-type (u-PA) and the tissue-type (TPA), cleaving the 369-Arg-|-Met-370 bond. As to expression, expressed in endothelial cells. Found in plasma, platelets, and hepatoma and fibrosarcoma cells.

The protein resides in the secreted. In terms of biological role, serine protease inhibitor. Inhibits TMPRSS7. Is a primary inhibitor of tissue-type plasminogen activator (PLAT) and urokinase-type plasminogen activator (PLAU). As PLAT inhibitor, it is required for fibrinolysis down-regulation and is responsible for the controlled degradation of blood clots. As PLAU inhibitor, it is involved in the regulation of cell adhesion and spreading. Acts as a regulator of cell migration, independently of its role as protease inhibitor. It is required for stimulation of keratinocyte migration during cutaneous injury repair. It is involved in cellular and replicative senescence. Plays a role in alveolar type 2 cells senescence in the lung. Is involved in the regulation of cementogenic differentiation of periodontal ligament stem cells, and regulates odontoblast differentiation and dentin formation during odontogenesis. The protein is Plasminogen activator inhibitor 1 (SERPINE1) of Homo sapiens (Human).